Reading from the N-terminus, the 218-residue chain is Ribose-5-phosphate isomerase A (218 aa).

Residues 28–31 (TGST), 81–84 (DGAD), and 94–97 (KGGG) each bind substrate. The active-site Proton acceptor is E103. K121 provides a ligand contact to substrate.

This sequence belongs to the ribose 5-phosphate isomerase family. In terms of assembly, homodimer.

It catalyses the reaction aldehydo-D-ribose 5-phosphate = D-ribulose 5-phosphate. Its pathway is carbohydrate degradation; pentose phosphate pathway; D-ribose 5-phosphate from D-ribulose 5-phosphate (non-oxidative stage): step 1/1. Catalyzes the reversible conversion of ribose-5-phosphate to ribulose 5-phosphate. This is Ribose-5-phosphate isomerase A from Aliivibrio fischeri (strain ATCC 700601 / ES114) (Vibrio fischeri).